Consider the following 755-residue polypeptide: Sentrin-specific protease 5 (755 aa).

The interval 269 to 329 (QKVTGDHQET…NSHVPDGHTK (61 aa)) is disordered. A compositionally biased stretch (basic and acidic residues) spans 272–283 (TGDHQETLRENG). Residues 563-724 (FYNKHMLDMD…VFVLQYCKCL (162 aa)) form a protease region. Active-site residues include His-646, Asp-663, and Cys-713.

The protein belongs to the peptidase C48 family. Interacts with CCAR2.

The protein resides in the nucleus. It localises to the nucleolus. Its function is as follows. Protease that catalyzes two essential functions in the SUMO pathway: processing of full-length SUMO3 to its mature form and deconjugation of SUMO2 and SUMO3 from targeted proteins. Has weak proteolytic activity against full-length SUMO1 or SUMO1 conjugates. Required for cell division. This is Sentrin-specific protease 5 (SENP5) from Macaca fascicularis (Crab-eating macaque).